A 178-amino-acid polypeptide reads, in one-letter code: MSRIGRLPIPVPSGVDITVEGATVTVKGPKGTLSHVVVEPIAVNREEGQLVVTRPDDERRSRSLHGLTRTLVSNMVTGVTAGYSKTLEIVGVGYRVQAKGSDLEFALGYSHPVPVKAPEGIRFEVQTPTRFVVHGIDKQLVGEVSAKIRGLRKPDPYKGKGVRYQGEVVRRKVGKTGK.

This sequence belongs to the universal ribosomal protein uL6 family. In terms of assembly, part of the 50S ribosomal subunit.

This protein binds to the 23S rRNA, and is important in its secondary structure. It is located near the subunit interface in the base of the L7/L12 stalk, and near the tRNA binding site of the peptidyltransferase center. This is Large ribosomal subunit protein uL6 from Frankia alni (strain DSM 45986 / CECT 9034 / ACN14a).